The following is a 367-amino-acid chain: Alanine racemase (367 aa).

K40 serves as the catalytic Proton acceptor; specific for D-alanine. N6-(pyridoxal phosphate)lysine is present on K40. R136 is a binding site for substrate. The active-site Proton acceptor; specific for L-alanine is Y263. M310 provides a ligand contact to substrate.

It belongs to the alanine racemase family. Pyridoxal 5'-phosphate is required as a cofactor.

The enzyme catalyses L-alanine = D-alanine. The protein operates within amino-acid biosynthesis; D-alanine biosynthesis; D-alanine from L-alanine: step 1/1. In terms of biological role, catalyzes the interconversion of L-alanine and D-alanine. May also act on other amino acids. This is Alanine racemase (alr) from Streptococcus suis (strain 98HAH33).